The chain runs to 652 residues: Putative glycine--tRNA ligase (652 aa).

The interval Gly-119–Val-145 is disordered. Residue Glu-221 coordinates glycine. Residues Arg-253–Glu-255 and Arg-264–Val-265 each bind ATP. Residue Glu-272 participates in glycine binding. Glu-380–Cys-381 serves as a coordination point for ATP. Position 499–501 (Glu-499–Ser-501) interacts with glycine. Arg-506 lines the ATP pocket.

Belongs to the class-II aminoacyl-tRNA synthetase family. Homodimer.

Its subcellular location is the cytoplasm. The enzyme catalyses tRNA(Gly) + glycine + ATP = glycyl-tRNA(Gly) + AMP + diphosphate. It catalyses the reaction 2 ATP + H(+) = P(1),P(4)-bis(5'-adenosyl) tetraphosphate + diphosphate. Catalyzes the ATP-dependent ligation of glycine to the 3'-end of its cognate tRNA, via the formation of an aminoacyl-adenylate intermediate (Gly-AMP). Also produces diadenosine tetraphosphate (Ap4A), a universal pleiotropic signaling molecule needed for cell regulation pathways, by direct condensation of 2 ATPs. Thereby, may play a special role in Ap4A homeostasis. The polypeptide is Putative glycine--tRNA ligase (grs1) (Schizosaccharomyces pombe (strain 972 / ATCC 24843) (Fission yeast)).